A 331-amino-acid chain; its full sequence is MKQTVYIASPESQQIHVWNLNHEGALTLTQVVDVPGQVQPMVVSPDKRYLYVGVRPEFRVLAYRIAPDDGALTFAAESALPGSPTHISTDHQGQFVFVGSYNAGNVSVTRLEDGLPVGVVDVVEGLDGCHSANISPDNRTLWVPALKQDRICLFTVSDDGHLVAQDPAEVTTVEGAGPRHMVFHPNEQYAYCVNELNSSVDVWELKDPHGNIECVQTLDMMPENFSDTRWAADIHITPDGRHLYACDRTASLITVFSVSEDGSVLSKEGFQPTETQPRGFNVDHSGKYLIAAGQKSHHISVYEIVGEEGLLHEKGRYAVGQGPMWVVVNAH.

Lysine 287 bears the N6-acetyllysine mark.

The protein belongs to the cycloisomerase 2 family.

The enzyme catalyses 6-phospho-D-glucono-1,5-lactone + H2O = 6-phospho-D-gluconate + H(+). It functions in the pathway carbohydrate degradation; pentose phosphate pathway; D-ribulose 5-phosphate from D-glucose 6-phosphate (oxidative stage): step 2/3. Catalyzes the hydrolysis of 6-phosphogluconolactone to 6-phosphogluconate. This is 6-phosphogluconolactonase from Escherichia coli O6:K15:H31 (strain 536 / UPEC).